Reading from the N-terminus, the 160-residue chain is Ubiquitin-like protein 4A (160 aa).

Residues 1–76 (MQLTVKALQG…LNLVVKPLEK (76 aa)) enclose the Ubiquitin-like domain. Residue Lys48 forms a Glycyl lysine isopeptide (Lys-Gly) (interchain with G-Cter in ubiquitin) linkage. Positions 99-141 (WQLIAKVLARHFSAADASRVLDQLQRDYERSLSRLTLDDIERL) are required and sufficient for interaction with BAG6.

Component of the BAG6/BAT3 complex, at least composed of BAG6, UBL4A and GET4/TRC35. Interacts with BAG6; the interaction is direct and required for UBL4A protein stability. Interacts with USP13; may be indirect via BAG6. In terms of processing, polyubiquitinated. Ubiquitination by AMFR and deubiquitination by USP13 may regulate the interaction between the BAG6/BAT complex and SGTA and therefore may regulate client proteins fate.

It localises to the cytoplasm. It is found in the cytosol. The protein localises to the nucleus. As part of a cytosolic protein quality control complex, the BAG6/BAT3 complex, maintains misfolded and hydrophobic patches-containing proteins in a soluble state and participates in their proper delivery to the endoplasmic reticulum or alternatively can promote their sorting to the proteasome where they undergo degradation. The BAG6/BAT3 complex is involved in the post-translational delivery of tail-anchored/type II transmembrane proteins to the endoplasmic reticulum membrane. Recruited to ribosomes, it interacts with the transmembrane region of newly synthesized tail-anchored proteins and together with SGTA and ASNA1 mediates their delivery to the endoplasmic reticulum. Client proteins that cannot be properly delivered to the endoplasmic reticulum are ubiquitinated and sorted to the proteasome. Similarly, the BAG6/BAT3 complex also functions as a sorting platform for proteins of the secretory pathway that are mislocalized to the cytosol either delivering them to the proteasome for degradation or to the endoplasmic reticulum. The BAG6/BAT3 complex also plays a role in the endoplasmic reticulum-associated degradation (ERAD), a quality control mechanism that eliminates unwanted proteins of the endoplasmic reticulum through their retrotranslocation to the cytosol and their targeting to the proteasome. It maintains these retrotranslocated proteins in an unfolded yet soluble state condition in the cytosol to ensure their proper delivery to the proteasome. The protein is Ubiquitin-like protein 4A (UBL4A) of Rhinolophus ferrumequinum (Greater horseshoe bat).